The chain runs to 443 residues: Putative metabolite transport protein YaaU (443 aa).

The Cytoplasmic segment spans residues 1-18 (MQPSRNFDDLKFSSIHRR). The chain crosses the membrane as a helical span at residues 19-39 (ILLWGSGGPFLDGYVLVMIGV). Residues 40–53 (ALEQLTPALKLDAD) are Periplasmic-facing. The helical transmembrane segment at 54 to 74 (WIGLLGAGTLAGLFVGTSLFG) threads the bilayer. Residues 75–84 (YISDKVGRRK) are Cytoplasmic-facing. A helical transmembrane segment spans residues 85-105 (MFLIDIIAIGVISVATMFVSS). Residues 106 to 113 (PVELLVMR) lie on the Periplasmic side of the membrane. Residues 114–134 (VLIGIVIGADYPIATSMITEF) form a helical membrane-spanning segment. The Cytoplasmic portion of the chain corresponds to 135–145 (SSTRQRAFSIS). The helical transmembrane segment at 146-166 (FIAAMWYVGATCADLVGYWLY) threads the bilayer. At 167-173 (DVEGGWR) the chain is on the periplasmic side. The chain crosses the membrane as a helical span at residues 174–194 (WMLGSAAIPCLLILIGRFELP). The Cytoplasmic portion of the chain corresponds to 195-241 (ESPRWLLRKGRVKECEEMMIKLFGEPVAFDEEQPQQTRFRDLFNRRH). Residues 242–262 (FPFVLFVAAIWTCQVIPMFAI) traverse the membrane as a helical segment. Residues 263-282 (YTFGPQIVGLLGLGVGKNAA) lie on the Periplasmic side of the membrane. The helical transmembrane segment at 283–303 (LGNVVISLFFMLGCIPPMLWL) threads the bilayer. Residues 304–309 (NTAGRR) lie on the Cytoplasmic side of the membrane. The chain crosses the membrane as a helical span at residues 310-329 (PLLIGSFAMMTLALAVLGLI). Residues 330 to 334 (PDMGI) are Periplasmic-facing. Residues 335–357 (WLVVMAFAVYAFFSGGPGNLQWL) form a helical membrane-spanning segment. Residues 358–373 (YPNELFPTDIRASAVG) are Cytoplasmic-facing. A helical membrane pass occupies residues 374–394 (VIMSLSRIGTIVSTWALPIFI). At 395-401 (NNYGISN) the chain is on the periplasmic side. A helical membrane pass occupies residues 402 to 422 (TMLMGAGISLFGLLISVAFAP). Topologically, residues 423–443 (ETRGMSLAQTSNMTIRGQRMG) are cytoplasmic.

It belongs to the major facilitator superfamily. Sugar transporter (TC 2.A.1.1) family.

It is found in the cell inner membrane. The chain is Putative metabolite transport protein YaaU (yaaU) from Escherichia coli (strain K12).